The following is a 320-amino-acid chain: tRNA N6-adenosine threonylcarbamoyltransferase (320 aa).

Fe cation-binding residues include H113 and H117. Substrate contacts are provided by residues 143–147, D176, G189, D193, and N281; that span reads VVSGG. Residue D305 participates in Fe cation binding.

This sequence belongs to the KAE1 / TsaD family. Fe(2+) serves as cofactor.

The protein resides in the cytoplasm. The catalysed reaction is L-threonylcarbamoyladenylate + adenosine(37) in tRNA = N(6)-L-threonylcarbamoyladenosine(37) in tRNA + AMP + H(+). Required for the formation of a threonylcarbamoyl group on adenosine at position 37 (t(6)A37) in tRNAs that read codons beginning with adenine. Is involved in the transfer of the threonylcarbamoyl moiety of threonylcarbamoyl-AMP (TC-AMP) to the N6 group of A37, together with TsaE and TsaB. TsaD likely plays a direct catalytic role in this reaction. This Mycoplasmoides gallisepticum (strain R(low / passage 15 / clone 2)) (Mycoplasma gallisepticum) protein is tRNA N6-adenosine threonylcarbamoyltransferase.